A 90-amino-acid polypeptide reads, in one-letter code: Aminoacyl carrier protein 1 (90 aa).

The region spanning 6–84 (TDVRNRIIKL…TLERMVMTQL (79 aa)) is the Carrier domain. Ser-42 is subject to O-(pantetheine 4'-phosphoryl)serine.

In terms of processing, 4'-phosphopantetheine is transferred from CoA to a specific serine of the apo-form of this carrier protein.

In terms of biological role, aminoacyl carrier protein. Can be charged with L-glycine via the formation of a thioester bond between the amino acid and the 4'-phosphopantetheinyl prosthetic group, catalyzed by the bll0957 ligase. The sequence is that of Aminoacyl carrier protein 1 from Bradyrhizobium diazoefficiens (strain JCM 10833 / BCRC 13528 / IAM 13628 / NBRC 14792 / USDA 110).